We begin with the raw amino-acid sequence, 345 residues long: Nuclear egress protein 1 (345 aa).

The CCCH-type zinc finger occupies 115-247 (CISLSEMGYT…FVFKPGSPLH (133 aa)).

The protein belongs to the herpesviridae NEC1 protein family. In terms of assembly, forms a heterohexameric complex with NEC2. Interacts with capsid vertex specific component 2/CVC2; this interaction directs the capsid to the host inner nuclear membrane to initiate budding. In terms of processing, phosphorylated at serine residues in the N-terminus. This phosphorylation regulates the localization within the inner nuclear membrane.

It is found in the host nucleus inner membrane. Its function is as follows. Plays an essential role in virion nuclear egress, the first step of virion release from infected cell. Within the host nucleus, NEC1 interacts with the newly formed capsid through the vertexes and directs it to the inner nuclear membrane by associating with NEC2. Induces the budding of the capsid at the inner nuclear membrane as well as its envelopment into the perinuclear space. There, the NEC1/NEC2 complex promotes the fusion of the enveloped capsid with the outer nuclear membrane and the subsequent release of the viral capsid into the cytoplasm where it will reach the secondary budding sites in the host Golgi or trans-Golgi network. This is Nuclear egress protein 1 from Psittacid herpesvirus 1 (isolate Amazon parrot/-/97-0001/1997) (PsHV-1).